A 201-amino-acid polypeptide reads, in one-letter code: Holliday junction branch migration complex subunit RuvA (201 aa).

The interval 1–64 (MFAYIKGVLA…EFSHTLYGFL (64 aa)) is domain I. The tract at residues 65-143 (SYQERDIFEI…AIGHLDTSDH (79 aa)) is domain II. The segment at 144-153 (IEPLTQDPKS) is flexible linker. The tract at residues 153–201 (SKSVQDAMLALINLGYNQTTAQKAIKQGMKELPEEIDLAQLITVALKHV) is domain III.

Belongs to the RuvA family. As to quaternary structure, homotetramer. Forms an RuvA(8)-RuvB(12)-Holliday junction (HJ) complex. HJ DNA is sandwiched between 2 RuvA tetramers; dsDNA enters through RuvA and exits via RuvB. An RuvB hexamer assembles on each DNA strand where it exits the tetramer. Each RuvB hexamer is contacted by two RuvA subunits (via domain III) on 2 adjacent RuvB subunits; this complex drives branch migration. In the full resolvosome a probable DNA-RuvA(4)-RuvB(12)-RuvC(2) complex forms which resolves the HJ.

Its subcellular location is the cytoplasm. The RuvA-RuvB-RuvC complex processes Holliday junction (HJ) DNA during genetic recombination and DNA repair, while the RuvA-RuvB complex plays an important role in the rescue of blocked DNA replication forks via replication fork reversal (RFR). RuvA specifically binds to HJ cruciform DNA, conferring on it an open structure. The RuvB hexamer acts as an ATP-dependent pump, pulling dsDNA into and through the RuvAB complex. HJ branch migration allows RuvC to scan DNA until it finds its consensus sequence, where it cleaves and resolves the cruciform DNA. The protein is Holliday junction branch migration complex subunit RuvA of Protochlamydia amoebophila (strain UWE25).